The chain runs to 246 residues: NAD(P)H-hydrate epimerase (246 aa).

Residues 12 to 234 enclose the YjeF N-terminal domain; the sequence is AAEIDKELMG…DFANKFGFEP (223 aa). 69 to 73 contacts (6S)-NADPHX; it reads NNGGD. K(+)-binding residues include Asn-70 and Asp-138. (6S)-NADPHX contacts are provided by residues 142-148 and Asp-173; that span reads GFSFKPP. Thr-176 is a binding site for K(+).

This sequence belongs to the NnrE/AIBP family. Requires K(+) as cofactor.

The protein localises to the cytoplasm. Its subcellular location is the mitochondrion. It carries out the reaction (6R)-NADHX = (6S)-NADHX. The catalysed reaction is (6R)-NADPHX = (6S)-NADPHX. Its function is as follows. Catalyzes the epimerization of the S- and R-forms of NAD(P)HX, a damaged form of NAD(P)H that is a result of enzymatic or heat-dependent hydration. This is a prerequisite for the S-specific NAD(P)H-hydrate dehydratase to allow the repair of both epimers of NAD(P)HX. This Saccharomyces cerevisiae (strain ATCC 204508 / S288c) (Baker's yeast) protein is NAD(P)H-hydrate epimerase.